Consider the following 130-residue polypeptide: Aspartate 1-decarboxylase (130 aa).

Serine 25 functions as the Schiff-base intermediate with substrate; via pyruvic acid in the catalytic mechanism. Position 25 is a pyruvic acid (Ser) (serine 25). Residue threonine 57 coordinates substrate. Residue tyrosine 58 is the Proton donor of the active site. Residue 73 to 75 (GAT) participates in substrate binding.

This sequence belongs to the PanD family. Heterooctamer of four alpha and four beta subunits. It depends on pyruvate as a cofactor. Is synthesized initially as an inactive proenzyme, which is activated by self-cleavage at a specific serine bond to produce a beta-subunit with a hydroxyl group at its C-terminus and an alpha-subunit with a pyruvoyl group at its N-terminus.

Its subcellular location is the cytoplasm. The enzyme catalyses L-aspartate + H(+) = beta-alanine + CO2. It participates in cofactor biosynthesis; (R)-pantothenate biosynthesis; beta-alanine from L-aspartate: step 1/1. Catalyzes the pyruvoyl-dependent decarboxylation of aspartate to produce beta-alanine. The sequence is that of Aspartate 1-decarboxylase from Lactiplantibacillus plantarum (strain ATCC BAA-793 / NCIMB 8826 / WCFS1) (Lactobacillus plantarum).